The primary structure comprises 299 residues: Glycine--tRNA ligase alpha subunit (299 aa).

It belongs to the class-II aminoacyl-tRNA synthetase family. In terms of assembly, tetramer of two alpha and two beta subunits.

It is found in the cytoplasm. The catalysed reaction is tRNA(Gly) + glycine + ATP = glycyl-tRNA(Gly) + AMP + diphosphate. This chain is Glycine--tRNA ligase alpha subunit, found in Dictyoglomus thermophilum (strain ATCC 35947 / DSM 3960 / H-6-12).